We begin with the raw amino-acid sequence, 237 residues long: Peptidase E (237 aa).

Residues Ser-122, Asp-137, and His-159 each act as charge relay system in the active site.

This sequence belongs to the peptidase S51 family.

The protein localises to the cytoplasm. The enzyme catalyses Dipeptidase E catalyzes the hydrolysis of dipeptides Asp-|-Xaa. It does not act on peptides with N-terminal Glu, Asn or Gln, nor does it cleave isoaspartyl peptides.. Its function is as follows. Hydrolyzes dipeptides containing N-terminal aspartate residues. May play a role in allowing the cell to use peptide aspartate to spare carbon otherwise required for the synthesis of the aspartate family of amino acids. The protein is Peptidase E of Shewanella baltica (strain OS185).